The primary structure comprises 1299 residues: DNA-directed RNA polymerase subunit beta' (1299 aa).

C60, C62, C75, and C78 together coordinate Zn(2+). The tract at residues 188 to 209 (GAKSDQKRRAKDGAEKEMGQTR) is disordered. The Mg(2+) site is built by D535, D537, and D539. Positions 882, 959, 966, and 969 each coordinate Zn(2+).

Belongs to the RNA polymerase beta' chain family. As to quaternary structure, the RNAP catalytic core consists of 2 alpha, 1 beta, 1 beta' and 1 omega subunit. When a sigma factor is associated with the core the holoenzyme is formed, which can initiate transcription. It depends on Mg(2+) as a cofactor. Zn(2+) is required as a cofactor.

It catalyses the reaction RNA(n) + a ribonucleoside 5'-triphosphate = RNA(n+1) + diphosphate. Its function is as follows. DNA-dependent RNA polymerase catalyzes the transcription of DNA into RNA using the four ribonucleoside triphosphates as substrates. This Clavibacter michiganensis subsp. michiganensis (strain NCPPB 382) protein is DNA-directed RNA polymerase subunit beta'.